Consider the following 394-residue polypeptide: uncharacterized protein (394 aa).

A phosphoserine mark is found at serine 117 and serine 121. 3 disordered regions span residues 177–295 (DSDE…PGTF), 315–347 (KRSI…GSLS), and 370–394 (SSEV…AHRV). Residues 178 to 190 (SDEEDEVDDEEIE) are compositionally biased toward acidic residues. Polar residues-rich tracts occupy residues 191–207 (SFNS…NSRY) and 216–230 (EKQS…VSQI). Composition is skewed to acidic residues over residues 231-263 (SDDE…DDED) and 284-295 (IPDDTDFVPGTF). A compositionally biased stretch (polar residues) spans 370-379 (SSEVLRNSKS). Serine 379 carries the post-translational modification Phosphoserine.

The protein localises to the nucleus. This is an uncharacterized protein from Schizosaccharomyces pombe (strain 972 / ATCC 24843) (Fission yeast).